Here is a 228-residue protein sequence, read N- to C-terminus: Phosphoglycolate phosphatase 1 (228 aa).

Aspartate 8 (nucleophile) is an active-site residue. Mg(2+)-binding residues include aspartate 8 and aspartate 10. Lysine 149 provides a ligand contact to substrate. Mg(2+) is bound by residues aspartate 172 and aspartate 176.

This sequence belongs to the archaeal SPP-like hydrolase family. Mg(2+) serves as cofactor.

The catalysed reaction is 2-phosphoglycolate + H2O = glycolate + phosphate. In terms of biological role, catalyzes the dephosphorylation of 2-phosphoglycolate. This is Phosphoglycolate phosphatase 1 from Saccharolobus solfataricus (strain ATCC 35092 / DSM 1617 / JCM 11322 / P2) (Sulfolobus solfataricus).